Here is a 695-residue protein sequence, read N- to C-terminus: G-patch and R3H domain-containing protein C30B4.02c (695 aa).

6 disordered regions span residues 168-200 (SDKEISSTEESEQLCYKEQESEKELYSKDNDDS), 213-242 (DIANNNAAPPPPLAQAQEQLSTENEDEFDI), 257-317 (FADL…FDEG), 332-351 (GNTDSLAEDEDDILEEDEDE), 388-448 (DSED…VAAR), and 475-517 (DKSK…DSDN). Residues 182–198 (CYKEQESEKELYSKDND) are compositionally biased toward basic and acidic residues. 3 stretches are compositionally biased toward acidic residues: residues 262-286 (VLEEDDDDEDEDEELEGEKEEEEEE), 307-317 (EDSESLEFDEG), and 337-351 (LAEDEDDILEEDEDE). Residues 421 to 434 (KKDRKLPKKMRKAQ) show a composition bias toward basic residues. The R3H domain occupies 525 to 587 (KIFINDVYQR…KRYTMLSKTH (63 aa)). Residues 652-695 (KENPGRRLLEKLGWYAGKGLGHPENEGSKDSLRAIVKVSRSGLG) enclose the G-patch domain.

Its subcellular location is the cytoplasm. The protein is G-patch and R3H domain-containing protein C30B4.02c of Schizosaccharomyces pombe (strain 972 / ATCC 24843) (Fission yeast).